We begin with the raw amino-acid sequence, 436 residues long: NAD(P)-dependent benzaldehyde dehydrogenase (436 aa).

NADP(+)-binding positions include Gly-117–Phe-119, Lys-143–Thr-147, Arg-175–Asn-178, Gly-193–Ser-194, Glu-215–Leu-216, Cys-249, and Glu-337–Phe-339. Active-site residues include Glu-215 and Cys-249.

The protein belongs to the aldehyde dehydrogenase family.

It carries out the reaction benzaldehyde + NAD(+) + H2O = benzoate + NADH + 2 H(+). The catalysed reaction is benzaldehyde + NADP(+) + H2O = benzoate + NADPH + 2 H(+). It functions in the pathway aromatic compound metabolism; (R)-mandelate degradation; benzoate from (R)-mandelate: step 4/4. NAD or NADP-dependent benzaldehyde dehydrogenase that catalyzes the conversion of benzaldehyde into benzoate in the (R)-mandelate degradation pathway. In Pseudomonas putida (Arthrobacter siderocapsulatus), this protein is NAD(P)-dependent benzaldehyde dehydrogenase (mdlD).